Here is a 182-residue protein sequence, read N- to C-terminus: MENSRVLSCQYRSSFGSSNARRIRAKSEIPAVVYGQGKDVSHLRIKSSEFNKKFAKFTDNTVLILDDGKLERCVFVKDAAENIASKLIYHIDFYEVDRNVELEKYVPIKLIGASIGVKEGGILTVLKEQVKVRSLPLDLPEFIELDLTPVNKGDSVLLKDLVLPSNVRLAENDENLEVVIIK.

It belongs to the bacterial ribosomal protein bL25 family. CTC subfamily. In terms of assembly, part of the 50S ribosomal subunit; part of the 5S rRNA/L5/L18/L25 subcomplex. Contacts the 5S rRNA. Binds to the 5S rRNA independently of L5 and L18.

Functionally, this is one of the proteins that binds to the 5S RNA in the ribosome where it forms part of the central protuberance. The polypeptide is Large ribosomal subunit protein bL25 (Borreliella burgdorferi (strain ATCC 35210 / DSM 4680 / CIP 102532 / B31) (Borrelia burgdorferi)).